The chain runs to 282 residues: D-alanine aminotransferase (282 aa).

Substrate is bound at residue Tyr32. Position 51 (Arg51) interacts with pyridoxal 5'-phosphate. 2 residues coordinate substrate: Arg99 and His101. The Proton acceptor role is filled by Lys146. Lys146 is subject to N6-(pyridoxal phosphate)lysine. Glu178 serves as a coordination point for pyridoxal 5'-phosphate.

The protein belongs to the class-IV pyridoxal-phosphate-dependent aminotransferase family. In terms of assembly, homodimer. The cofactor is pyridoxal 5'-phosphate.

The catalysed reaction is D-alanine + 2-oxoglutarate = D-glutamate + pyruvate. Its function is as follows. Acts on the D-isomers of alanine, leucine, aspartate, glutamate, aminobutyrate, norvaline and asparagine. The enzyme transfers an amino group from a substrate D-amino acid to the pyridoxal phosphate cofactor to form pyridoxamine and an alpha-keto acid in the first half-reaction. The second half-reaction is the reverse of the first, transferring the amino group from the pyridoxamine to a second alpha-keto acid to form the product D-amino acid via a ping-pong mechanism. This is an important process in the formation of D-alanine and D-glutamate, which are essential bacterial cell wall components. The sequence is that of D-alanine aminotransferase (dat) from Staphylococcus epidermidis (strain ATCC 35984 / DSM 28319 / BCRC 17069 / CCUG 31568 / BM 3577 / RP62A).